A 344-amino-acid chain; its full sequence is Arginine N-succinyltransferase (344 aa).

Leu125 is a binding site for succinyl-CoA. Residue His229 is the Proton donor of the active site.

It belongs to the arginine N-succinyltransferase family.

The catalysed reaction is succinyl-CoA + L-arginine = N(2)-succinyl-L-arginine + CoA + H(+). Its pathway is amino-acid degradation; L-arginine degradation via AST pathway; L-glutamate and succinate from L-arginine: step 1/5. In terms of biological role, catalyzes the transfer of succinyl-CoA to arginine to produce N(2)-succinylarginine. In Shigella dysenteriae serotype 1 (strain Sd197), this protein is Arginine N-succinyltransferase.